The primary structure comprises 445 residues: Trigger factor (445 aa).

In terms of domain architecture, PPIase FKBP-type spans 172-257 (GDQVVIDFVG…VKSVNWAHMP (86 aa)).

Belongs to the FKBP-type PPIase family. Tig subfamily.

The protein resides in the cytoplasm. The catalysed reaction is [protein]-peptidylproline (omega=180) = [protein]-peptidylproline (omega=0). In terms of biological role, involved in protein export. Acts as a chaperone by maintaining the newly synthesized protein in an open conformation. Functions as a peptidyl-prolyl cis-trans isomerase. The protein is Trigger factor of Polynucleobacter asymbioticus (strain DSM 18221 / CIP 109841 / QLW-P1DMWA-1) (Polynucleobacter necessarius subsp. asymbioticus).